Reading from the N-terminus, the 327-residue chain is Cell division protein ZipA (327 aa).

At 1-5 (MQDLR) the chain is on the periplasmic side. The helical transmembrane segment at 6–26 (LILIVVGAIAIIALLLHGLWT) threads the bilayer. The Cytoplasmic portion of the chain corresponds to 27 to 327 (SRKERSSLFR…REVLDANTIA (301 aa)). Over residues 60–71 (GEVRVRTSHPQE) the composition is skewed to basic and acidic residues. Positions 60–182 (GEVRVRTSHP…EPVAPAPEAK (123 aa)) are disordered. Polar residues-rich tracts occupy residues 94-103 (KSAQVKTASR) and 163-173 (APQQHVESQQE).

The protein belongs to the ZipA family. In terms of assembly, interacts with FtsZ via their C-terminal domains.

The protein localises to the cell inner membrane. Its function is as follows. Essential cell division protein that stabilizes the FtsZ protofilaments by cross-linking them and that serves as a cytoplasmic membrane anchor for the Z ring. Also required for the recruitment to the septal ring of downstream cell division proteins. This is Cell division protein ZipA from Yersinia pseudotuberculosis serotype O:1b (strain IP 31758).